Reading from the N-terminus, the 248-residue chain is tRNA (guanine-N(1)-)-methyltransferase (248 aa).

S-adenosyl-L-methionine contacts are provided by residues Gly113 and 133-138; that span reads IGDYVL.

This sequence belongs to the RNA methyltransferase TrmD family. As to quaternary structure, homodimer.

The protein resides in the cytoplasm. It carries out the reaction guanosine(37) in tRNA + S-adenosyl-L-methionine = N(1)-methylguanosine(37) in tRNA + S-adenosyl-L-homocysteine + H(+). In terms of biological role, specifically methylates guanosine-37 in various tRNAs. The polypeptide is tRNA (guanine-N(1)-)-methyltransferase (Shewanella halifaxensis (strain HAW-EB4)).